We begin with the raw amino-acid sequence, 521 residues long: Cholesterol side-chain cleavage enzyme, mitochondrial (521 aa).

The N-terminal 39 residues, Met-1 to Gly-39, are a transit peptide targeting the mitochondrion. A heme-binding site is contributed by Cys-462.

The protein belongs to the cytochrome P450 family. As to quaternary structure, interacts with FDX1/adrenodoxin. It depends on heme as a cofactor.

It is found in the mitochondrion inner membrane. It carries out the reaction 6 reduced [adrenodoxin] + cholesterol + 3 O2 + 6 H(+) = 4-methylpentanal + pregnenolone + 6 oxidized [adrenodoxin] + 4 H2O. The enzyme catalyses 2 reduced [adrenodoxin] + cholesterol + O2 + 2 H(+) = (22R)-hydroxycholesterol + 2 oxidized [adrenodoxin] + H2O. It catalyses the reaction (22R)-hydroxycholesterol + 2 reduced [adrenodoxin] + O2 + 2 H(+) = (20R,22R)-20,22-dihydroxycholesterol + 2 oxidized [adrenodoxin] + H2O. The catalysed reaction is (20R,22R)-20,22-dihydroxycholesterol + 2 reduced [adrenodoxin] + O2 + 2 H(+) = 4-methylpentanal + pregnenolone + 2 oxidized [adrenodoxin] + 2 H2O. Its pathway is lipid metabolism; C21-steroid hormone metabolism. It functions in the pathway steroid metabolism; cholesterol metabolism. In terms of biological role, a cytochrome P450 monooxygenase that catalyzes the side-chain hydroxylation and cleavage of cholesterol to pregnenolone, the precursor of most steroid hormones. Catalyzes three sequential oxidation reactions of cholesterol, namely the hydroxylation at C22 followed with the hydroxylation at C20 to yield 20R,22R-hydroxycholesterol that is further cleaved between C20 and C22 to yield the C21-steroid pregnenolone and 4-methylpentanal. Mechanistically, uses molecular oxygen inserting one oxygen atom into a substrate and reducing the second into a water molecule. Two electrons are provided by NADPH via a two-protein mitochondrial transfer system comprising flavoprotein FDXR (adrenodoxin/ferredoxin reductase) and nonheme iron-sulfur protein FDX1 or FDX2 (adrenodoxin/ferredoxin). This is Cholesterol side-chain cleavage enzyme, mitochondrial (CYP11A1) from Macaca fascicularis (Crab-eating macaque).